The following is a 541-amino-acid chain: Berberine bridge enzyme-like 1 (541 aa).

The N-terminal stretch at 1 to 20 is a signal peptide; that stretch reads MKLSCLVFLIVSSLVSSSLA. Residues Asn-25, Asn-38, Asn-73, Asn-136, Asn-302, Asn-339, and Asn-357 are each glycosylated (N-linked (GlcNAc...) asparagine). Cysteines 35 and 98 form a disulfide. Residues 76 to 255 form the FAD-binding PCMH-type domain; sequence TSPKPLLVIA…LSFKIKLVPV (180 aa). The segment at residues 113–180 is a cross-link (6-(S-cysteinyl)-8alpha-(pros-histidyl)-FAD (His-Cys)); that stretch reads HDYDGVSYIS…GTHGFPAGVC (68 aa).

Belongs to the oxygen-dependent FAD-linked oxidoreductase family. Requires FAD as cofactor. In terms of processing, the FAD cofactor is bound via a bicovalent 6-S-cysteinyl, 8alpha-N1-histidyl FAD linkage. In terms of tissue distribution, accumulates in cell walls of etiolated hypocotyls.

The protein resides in the secreted. Its subcellular location is the cell wall. This is Berberine bridge enzyme-like 1 from Arabidopsis thaliana (Mouse-ear cress).